A 955-amino-acid polypeptide reads, in one-letter code: Anoctamin-4 (955 aa).

The Extracellular portion of the chain corresponds to 1 to 352; sequence MEASSSGITN…FGEKIGLYFA (352 aa). The tract at residues 72–100 is disordered; sequence CKDDDSLLHPGNLTSTSDDASRLEAGGET. N-linked (GlcNAc...) asparagine glycosylation is found at N83, N105, N257, and N288. A helical transmembrane segment spans residues 353-373; it reads WLGWYTGMLFPAAFIGLFVFL. Residues 374 to 424 are Cytoplasmic-facing; the sequence is YGVTTLDHSQVSKEVCQATDIIMCPVCDKYCPFMRLSDSCVYAKVTHLFDN. The helical transmembrane segment at 425–445 threads the bilayer; sequence GATVFFAVFMAVWATVFLEFW. The Extracellular segment spans residues 446 to 505; sequence KRRRAVIAYDWDLIDWEEEEEEIRPQFEAKYSKKERMNPISGKPEPYQAFTDKCSRLIVS. The chain crosses the membrane as a helical span at residues 506 to 526; sequence ASGIFFMICVVIAAVFGIVIY. Residues 527–547 lie on the Cytoplasmic side of the membrane; that stretch reads RVVTVSTFAAFKWALIRNNSQ. A helical transmembrane segment spans residues 548–568; it reads VATTGTAVCINFCIIMLLNVL. The Extracellular portion of the chain corresponds to 569-595; the sequence is YEKVALLLTNLEQPRTESEWENSFTLK. A helical membrane pass occupies residues 596–616; sequence MFLFQFVNLNSSTFYIAFFLG. Residues 617-715 lie on the Cytoplasmic side of the membrane; sequence RFTGHPGAYL…AYGLFDEYLE (99 aa). Residues 716 to 736 form a helical membrane-spanning segment; it reads MILQFGFTTIFVAAFPLAPLL. The Extracellular portion of the chain corresponds to 737 to 768; sequence ALLNNIIEIRLDAYKFVTQWRRPLASRAKDIG. The helical transmembrane segment at 769-789 threads the bilayer; the sequence is IWYGILEGIGILSVITNAFVI. The Cytoplasmic segment spans residues 790 to 885; sequence AITSDFIPRL…QFWHVLAARL (96 aa). Residues 886-906 traverse the membrane as a helical segment; it reads AFIIVFEHLVFCIKHLISYLI. Over 907–955 the chain is Extracellular; sequence PDLPKDLRDRMRREKYLIQEMMYEAELERLQKERKERKKNGKAHHNEWP.

Belongs to the anoctamin family.

The protein resides in the cell membrane. It catalyses the reaction a 1,2-diacyl-sn-glycero-3-phospho-L-serine(in) = a 1,2-diacyl-sn-glycero-3-phospho-L-serine(out). The enzyme catalyses a beta-D-galactosyl-(1&lt;-&gt;1')-N-acylsphing-4-enine(out) = a beta-D-galactosyl-(1&lt;-&gt;1')-N-acylsphing-4-enine(in). The catalysed reaction is a 1,2-diacyl-sn-glycero-3-phosphocholine(in) = a 1,2-diacyl-sn-glycero-3-phosphocholine(out). Its function is as follows. Has calcium-dependent phospholipid scramblase activity; scrambles phosphatidylserine, phosphatidylcholine and galactosylceramide. Does not exhibit calcium-activated chloride channel (CaCC) activity. The polypeptide is Anoctamin-4 (ANO4) (Homo sapiens (Human)).